A 921-amino-acid chain; its full sequence is Protein translocase subunit SecA (921 aa).

Residues Q85, 103–107, and D514 each bind ATP; that span reads GEGKT. Positions 905, 907, 916, and 917 each coordinate Zn(2+).

It belongs to the SecA family. Monomer and homodimer. Part of the essential Sec protein translocation apparatus which comprises SecA, SecYEG and auxiliary proteins SecDF-YajC and YidC. Requires Zn(2+) as cofactor.

It localises to the cell inner membrane. Its subcellular location is the cytoplasm. The enzyme catalyses ATP + H2O + cellular proteinSide 1 = ADP + phosphate + cellular proteinSide 2.. In terms of biological role, part of the Sec protein translocase complex. Interacts with the SecYEG preprotein conducting channel. Has a central role in coupling the hydrolysis of ATP to the transfer of proteins into and across the cell membrane, serving both as a receptor for the preprotein-SecB complex and as an ATP-driven molecular motor driving the stepwise translocation of polypeptide chains across the membrane. The chain is Protein translocase subunit SecA from Herminiimonas arsenicoxydans.